We begin with the raw amino-acid sequence, 291 residues long: ATP synthase subunit a (291 aa).

5 consecutive transmembrane segments (helical) span residues 47–67 (FTNL…LVFV), 140–160 (HFLI…IVGF), 167–187 (FFSF…LVLL), 207–227 (MMAG…MLFL), and 230–250 (IFYF…TGLE).

The protein belongs to the ATPase A chain family. F-type ATPases have 2 components, CF(1) - the catalytic core - and CF(0) - the membrane proton channel. CF(1) has five subunits: alpha(3), beta(3), gamma(1), delta(1), epsilon(1). CF(0) has three main subunits: a, b and c.

The protein resides in the mitochondrion inner membrane. In terms of biological role, mitochondrial membrane ATP synthase (F(1)F(0) ATP synthase or Complex V) produces ATP from ADP in the presence of a proton gradient across the membrane which is generated by electron transport complexes of the respiratory chain. F-type ATPases consist of two structural domains, F(1) - containing the extramembraneous catalytic core and F(0) - containing the membrane proton channel, linked together by a central stalk and a peripheral stalk. During catalysis, ATP synthesis in the catalytic domain of F(1) is coupled via a rotary mechanism of the central stalk subunits to proton translocation. Key component of the proton channel; it may play a direct role in the translocation of protons across the membrane. This Zea mays (Maize) protein is ATP synthase subunit a (ATP6).